A 246-amino-acid polypeptide reads, in one-letter code: PARP-type zinc finger-containing protein C2A9.07c (246 aa).

The PARP-type; degenerate zinc-finger motif lies at 8–99 (YRVELAKTGR…EKILRAFEQG (92 aa)). A compositionally biased stretch (basic and acidic residues) spans 103–126 (EEDEERCRKMASDASEEKDRKIEE). A disordered region spans residues 103–246 (EEDEERCRKM…ESGNEYSDSD (144 aa)). The residue at position 130 (Thr-130) is a Phosphothreonine. Ser-131 carries the post-translational modification Phosphoserine. Residues 157 to 168 (NKKHKAERKRSP) show a composition bias toward basic residues. Positions 175–184 (LEDDEEIEDV) are enriched in acidic residues. The segment covering 185-196 (ASDKDEEEKPWS) has biased composition (basic and acidic residues). Acidic residues predominate over residues 197–215 (GDEEDDDELVVKDSEDETE). Ser-243 and Ser-245 each carry phosphoserine.

Its subcellular location is the nucleus. It localises to the mitochondrion. The chain is PARP-type zinc finger-containing protein C2A9.07c from Schizosaccharomyces pombe (strain 972 / ATCC 24843) (Fission yeast).